The chain runs to 805 residues: Kinesin-like protein KIP3 (805 aa).

One can recognise a Kinesin motor domain in the interval S10–I438. Residue G192–T199 coordinates ATP. The stretch at L449–K481 forms a coiled coil. The interval N720–K805 is disordered. A compositionally biased stretch (polar residues) spans M764–G773. Over residues P774–A783 the composition is skewed to low complexity. The segment covering S792–K805 has biased composition (polar residues).

The protein belongs to the TRAFAC class myosin-kinesin ATPase superfamily. Kinesin family. Kinesin II subfamily.

It is found in the cytoplasm. The protein resides in the cytoskeleton. This Saccharomyces cerevisiae (strain ATCC 204508 / S288c) (Baker's yeast) protein is Kinesin-like protein KIP3 (KIP3).